The chain runs to 116 residues: Large ribosomal subunit protein bL17 (116 aa).

Belongs to the bacterial ribosomal protein bL17 family. As to quaternary structure, part of the 50S ribosomal subunit. Contacts protein L32.

The protein is Large ribosomal subunit protein bL17 of Prochlorococcus marinus (strain MIT 9312).